A 776-amino-acid polypeptide reads, in one-letter code: U3 small nucleolar RNA-associated protein 4 (776 aa).

WD repeat units follow at residues 35 to 40 (RCRFVD), 132 to 169 (LPLR…VLID), 178 to 214 (EHDT…RIWS), 230 to 266 (KVDK…KFWD), 271 to 308 (TLNQ…FQFS), and 417 to 452 (VCKL…KVFH).

Interacts with snoRNA U3. Interacts with MPP10. Component of the ribosomal small subunit (SSU) processome composed of at least 40 protein subunits and snoRNA U3. In the absence of snoRNA3, forms a complex with other t-UTPs. This complex can associate with pre-18S ribosomal RNAs.

The protein localises to the nucleus. It is found in the nucleolus. In terms of biological role, involved in nucleolar processing of pre-18S ribosomal RNA. Required for optimal pre-ribosomal RNA transcription by RNA polymerase I together with a subset of U3 proteins required for transcription (t-UTPs). The protein is U3 small nucleolar RNA-associated protein 4 (UTP4) of Saccharomyces cerevisiae (strain ATCC 204508 / S288c) (Baker's yeast).